Consider the following 343-residue polypeptide: Signal peptide peptidase 2 (343 aa).

Over 1-19 (MKTHERAANLALAGLSLAP) the chain is Lumenal. Residues 20-40 (LVVKVNPNANVILTACLAVYV) form a helical membrane-spanning segment. At 41–62 (GCYRSVKPTPPAETMSKEHAMR) the chain is on the cytoplasmic side. A helical membrane pass occupies residues 63–83 (FPLVGSAMLLSLFLLFKFLSK). Over 84–89 (DLVNTV) the chain is Lumenal. Residues 90–110 (LTAYFFILGIAALCATLLPSI) form a helical membrane-spanning segment. The Cytoplasmic segment spans residues 111 to 141 (KRFLPKEWNDNAIVWRAPLFHSLSVEFTRSQ). The chain crosses the membrane as a helical span at residues 142–162 (VVASIPGFFFCIWYAAKKHWL). Over 163-165 (ANN) the chain is Lumenal. Residues 166 to 186 (VLGISFCIQGIEMLSLGSFKT) form a helical membrane-spanning segment. Residues 187-188 (GA) lie on the Cytoplasmic side of the membrane. The chain crosses the membrane as a helical span at residues 189–209 (ILLSGLFFYDIFWVFFTPVMV). Asp-198 is an active-site residue. Residues 210–230 (SVAKSFDAPIKLLFPTGDAAR) lie on the Lumenal side of the membrane. Residues 231 to 251 (PFSMLGLGDIVIPGIFVALAL) form a helical membrane-spanning segment. Asp-239 is a catalytic residue. At 252-266 (RFDVSRGIKNRYFNS) the chain is on the cytoplasmic side. A helical membrane pass occupies residues 267–287 (AFLGYTVGLTVTIIVMNWFQA). Residues 288–290 (AQP) lie on the Lumenal side of the membrane. The PAL signature appears at 290-292 (PAL). Residues 291–311 (ALLYIVPGVIGFVAVHCLWNG) traverse the membrane as a helical segment. Topologically, residues 312 to 343 (EVKPLLEYNESKAEEEEACEEDTDSKQNKKKE) are cytoplasmic. Over residues 324–334 (AEEEEACEEDT) the composition is skewed to acidic residues. The segment at 324 to 343 (AEEEEACEEDTDSKQNKKKE) is disordered. The short motif at 340-343 (KKKE) is the Endoplasmic reticulum targeting signal element.

Belongs to the peptidase A22B family. Ubiquitous.

The protein resides in the endoplasmic reticulum membrane. In terms of biological role, intramembrane-cleaving aspartic protease (I-CLiP) that cleaves type II membrane signal peptides in the hydrophobic plane of the membrane. Catalyzes intramembrane proteolysis of some signal peptides after they have been cleaved from a preprotein, resulting in the release of the fragment from the ER membrane into the cytoplasm. This chain is Signal peptide peptidase 2 (SPP2), found in Oryza sativa subsp. japonica (Rice).